Consider the following 805-residue polypeptide: Leucine--tRNA ligase (805 aa).

The short motif at 40 to 51 is the 'HIGH' region element; that stretch reads PYPSGAGLHVGH. A 'KMSKS' region motif is present at residues 576-580; it reads KMSKS. Position 579 (K579) interacts with ATP.

The protein belongs to the class-I aminoacyl-tRNA synthetase family.

Its subcellular location is the cytoplasm. The catalysed reaction is tRNA(Leu) + L-leucine + ATP = L-leucyl-tRNA(Leu) + AMP + diphosphate. In Geobacillus kaustophilus (strain HTA426), this protein is Leucine--tRNA ligase.